The following is a 457-amino-acid chain: ATP synthase subunit beta (457 aa).

Position 147–154 (147–154 (GGAGVGKT)) interacts with ATP.

Belongs to the ATPase alpha/beta chains family. F-type ATPases have 2 components, CF(1) - the catalytic core - and CF(0) - the membrane proton channel. CF(1) has five subunits: alpha(3), beta(3), gamma(1), delta(1), epsilon(1). CF(0) has three main subunits: a(1), b(2) and c(9-12). The alpha and beta chains form an alternating ring which encloses part of the gamma chain. CF(1) is attached to CF(0) by a central stalk formed by the gamma and epsilon chains, while a peripheral stalk is formed by the delta and b chains.

The protein localises to the cell inner membrane. It carries out the reaction ATP + H2O + 4 H(+)(in) = ADP + phosphate + 5 H(+)(out). Produces ATP from ADP in the presence of a proton gradient across the membrane. The catalytic sites are hosted primarily by the beta subunits. This Actinobacillus pleuropneumoniae serotype 5b (strain L20) protein is ATP synthase subunit beta.